The sequence spans 357 residues: mRNA endoribonuclease toxin LS (357 aa).

In terms of assembly, forms homodimer in solution. Forms a complex with cognate antitoxin RnlB and with enterobacteria phage T4 antitoxin Dmd.

It is found in the cytoplasm. In terms of biological role, toxic component of a type II toxin-antitoxin (TA) system. A stable (half-life 27.6 minutes) endoribonuclease that in the absence of cognate antitoxin RnlB causes generalized RNA degradation. Degrades late enterobacteria phage T4 mRNAs, protecting the host against T4 reproduction. Activity is inhibited by cognate antitoxin RnlB and by enterobacteria phage T4 protein Dmd. Targets cyaA mRNA. The polypeptide is mRNA endoribonuclease toxin LS (rnlA) (Escherichia coli (strain K12)).